Consider the following 333-residue polypeptide: L-lactate dehydrogenase B chain (333 aa).

Residues 29-57 (GQVGMACAISILGKGLCDELALVDVLEDK) and Arg99 each bind NAD(+). Arg106, Asn138, and Arg169 together coordinate substrate. Residue Asn138 coordinates NAD(+). The active-site Proton acceptor is His193. Thr248 is a binding site for substrate.

Belongs to the LDH/MDH superfamily. LDH family. As to quaternary structure, homotetramer.

The protein localises to the cytoplasm. It carries out the reaction (S)-lactate + NAD(+) = pyruvate + NADH + H(+). The protein operates within fermentation; pyruvate fermentation to lactate; (S)-lactate from pyruvate: step 1/1. Interconverts simultaneously and stereospecifically pyruvate and lactate with concomitant interconversion of NADH and NAD(+). In Pelodiscus sinensis japonicus (Chinese soft-shelled turtle), this protein is L-lactate dehydrogenase B chain (LDHB).